Reading from the N-terminus, the 358-residue chain is Peptide chain release factor 1 (358 aa).

Gln237 carries the post-translational modification N5-methylglutamine.

It belongs to the prokaryotic/mitochondrial release factor family. In terms of processing, methylated by PrmC. Methylation increases the termination efficiency of RF1.

The protein localises to the cytoplasm. Functionally, peptide chain release factor 1 directs the termination of translation in response to the peptide chain termination codons UAG and UAA. The protein is Peptide chain release factor 1 of Streptomyces avermitilis (strain ATCC 31267 / DSM 46492 / JCM 5070 / NBRC 14893 / NCIMB 12804 / NRRL 8165 / MA-4680).